The sequence spans 268 residues: Expansin-B3 (268 aa).

Positions methionine 1 to glycine 25 are cleaved as a signal peptide. Asparagine 30 carries an N-linked (GlcNAc...) asparagine glycan. Positions glycine 62–leucine 168 constitute an Expansin-like EG45 domain. Cystine bridges form between cysteine 65–cysteine 93, cysteine 96–cysteine 163, and cysteine 101–cysteine 107. The Expansin-like CBD domain maps to valine 181–serine 262. Asparagine 238 is a glycosylation site (N-linked (GlcNAc...) asparagine).

This sequence belongs to the expansin family. Expansin B subfamily. In terms of tissue distribution, expressed in roots, coleoptiles and internodes.

Its subcellular location is the secreted. The protein resides in the cell wall. It localises to the membrane. In terms of biological role, may cause loosening and extension of plant cell walls by disrupting non-covalent bonding between cellulose microfibrils and matrix glucans. No enzymatic activity has been found. May be required for rapid internodal elongation in deepwater rice during submergence. The chain is Expansin-B3 (EXPB3) from Oryza sativa subsp. japonica (Rice).